The following is a 319-amino-acid chain: Probable ABC transporter permease protein MG189 homolog (319 aa).

6 consecutive transmembrane segments (helical) span residues 41-61 (VVLCFFGLMVIFPFYLMLVVA), 98-118 (AIWINSLVTILSIILRLFFTV), 134-154 (LFWFIFLAVLILPESALLIGQ), 169-189 (PAIILGLTMPFVASVFSGFMF), 229-249 (TVSILTAFAAWNSYLWPLLLL), and 282-302 (NLKMAAAILAILPMFIVYFLF). The ABC transmembrane type-1 domain occupies 99–302 (IWINSLVTIL…LPMFIVYFLF (204 aa)).

It belongs to the binding-protein-dependent transport system permease family. MalFG subfamily.

The protein resides in the cell membrane. Probably part of a binding-protein-dependent transport system. Probably responsible for the translocation of the substrate across the membrane. The protein is Probable ABC transporter permease protein MG189 homolog of Mycoplasma pneumoniae (strain ATCC 29342 / M129 / Subtype 1) (Mycoplasmoides pneumoniae).